Here is a 1061-residue protein sequence, read N- to C-terminus: DNA polymerase (1061 aa).

The disordered stretch occupies residues 773-792; sequence NSEAEESDEDQGPAPFYSPP.

The protein belongs to the DNA polymerase type-B family. Heterodimer with the terminal protein; this heterodimer binds to bp 9 to 18 of the genome. Forms a complex with viral pTP, DBP and hosts NFIA and POU2F1/OCT1 for initiation of replication.

The protein resides in the host nucleus. The catalysed reaction is DNA(n) + a 2'-deoxyribonucleoside 5'-triphosphate = DNA(n+1) + diphosphate. Functionally, eukaryotic-type DNA polymerase involved in viral genomic replication. DNA synthesis is protein primed, and acts in a strand displacement replication. Assembles in complex with viral pTP, DBP, host NFIA and host POU2F1/OCT1 on viral origin of replication. The polymerase covalently transfers dCMP onto pTP, thereby initiating complementary strand synthesis. The protein is DNA polymerase of Human adenovirus A serotype 12 (HAdV-12).